Reading from the N-terminus, the 239-residue chain is tRNA (guanine-N(1)-)-methyltransferase (239 aa).

Residues glycine 109 and 128–133 contribute to the S-adenosyl-L-methionine site; that span reads IGDYVL.

This sequence belongs to the RNA methyltransferase TrmD family. Homodimer.

Its subcellular location is the cytoplasm. The enzyme catalyses guanosine(37) in tRNA + S-adenosyl-L-methionine = N(1)-methylguanosine(37) in tRNA + S-adenosyl-L-homocysteine + H(+). Functionally, specifically methylates guanosine-37 in various tRNAs. The chain is tRNA (guanine-N(1)-)-methyltransferase from Thermus thermophilus (strain ATCC 27634 / DSM 579 / HB8).